Here is a 126-residue protein sequence, read N- to C-terminus: uncharacterized protein (126 aa).

Residues 55–77 form a helical membrane-spanning segment; the sequence is MLLINSNLVLSGLLLFIDVYRAA.

It localises to the membrane. This is an uncharacterized protein from Dictyostelium discoideum (Social amoeba).